Reading from the N-terminus, the 537-residue chain is MKFITVAAALFASTSLAVPTNPNHGGSACVPNPHHGGSSTKSGPGGNPTGGNPTGSNTNTGPGGNPTGSNTSSSPGTRTTGGSTSSNPGPKPTSSNTRSGPATTTTGTKTGSNTSSGPATTSTGNPGPGGEFHCPRGLYSNLQCCATDVLGVVDLDCASPPTTPTSGDNFNAICAAVGKQAKCCVLPVAGQAALCQNPIGGNPPGGNPPGGNPPGGNPPGGNPPGGNPPGGPVCPSGLYSNAQCCATDVLGVADLNCDTPSKTPTSGADFTAICAASGQQAKCCVIPVAGQALLCENPTGGNPPGGNPPGGNPPGGNPPGGNPPGGNPPGGNPPGGNPTSSAPGSNPTNPPGGPVCPPGLYSNAQCCAVDVLGLADLDCDTPSQTPTSSADFRSICAADGQAAKCCVIPVAGQALLCQDPLGGNPPGGNPPGSSNPPGGSNPPGGSNPPGGSNPPGGNPPGGNPPGGNHVCPSGLYSNAQCCDVNVLGVANLNCAPPSTKPTSGKNFESICAAIGKGSMCCVVPLLGQAILCQRAII.

The signal sequence occupies residues 1–17; it reads MKFITVAAALFASTSLA. 4 hydrophobin regions span residues 63–199, 200–299, 300–421, and 422–537; these read GGNP…QNPI, GGNP…ENPT, GGNP…QDPL, and GGNP…RAII. N70 and N113 each carry an N-linked (GlcNAc...) asparagine glycan. Disulfide bonds link C134–C183, C144–C174, C145–C157, C184–C195, C234–C283, C244–C274, C245–C257, C284–C295, C356–C405, C366–C396, C367–C379, C406–C417, C471–C520, C481–C511, C482–C494, and C521–C532.

The protein belongs to the cerato-ulmin hydrophobin family. In terms of assembly, homotetramer. Further self-assembles to form highly ordered films at water-air interfaces through intermolecular interactions.

The protein resides in the secreted. Its subcellular location is the cell wall. In terms of biological role, aerial growth, conidiation, and dispersal of filamentous fungi in the environment rely upon a capability of their secreting small amphipathic proteins called hydrophobins (HPBs) with low sequence identity. Class I can self-assemble into an outermost layer of rodlet bundles on aerial cell surfaces, conferring cellular hydrophobicity that supports fungal growth, development and dispersal; whereas Class II form highly ordered films at water-air interfaces through intermolecular interactions but contribute nothing to the rodlet structure. In Cordyceps militaris (Caterpillar fungus), this protein is Quadr-hydrophobin.